Consider the following 557-residue polypeptide: Coiled-coil domain-containing protein 22 homolog (557 aa).

Coiled coils occupy residues 260-350 (RLGQ…LQSQ) and 489-554 (ELTA…AGRN).

The protein belongs to the CCDC22 family.

In Anopheles gambiae (African malaria mosquito), this protein is Coiled-coil domain-containing protein 22 homolog.